A 398-amino-acid polypeptide reads, in one-letter code: Cell adhesion molecule 3 (398 aa).

The signal sequence occupies residues 1 to 24; the sequence is MGAPAASLLLLLLLFACCWAPGGA. The region spanning 25–126 is the Ig-like V-type domain; sequence NLSQDDSQPW…VRTAKSLVTV (102 aa). Residues 25-330 are Extracellular-facing; it reads NLSQDDSQPW…PVPSSSSTYH (306 aa). 3 disulfide bridges follow: Cys50–Cys110, Cys152–Cys209, and Cys254–Cys299. 2 Ig-like C2-type domains span residues 130-228 and 233-315; these read PQKP…QRIE and PTAM…YTLN. A glycan (N-linked (GlcNAc...) asparagine) is linked at Asn290. Residues 331–351 traverse the membrane as a helical segment; it reads AIIGGIVAFIVFLLLIMLIFL. Residues 352–398 are Cytoplasmic-facing; sequence GHYLIRHKGTYLTHEAKGSDDAPDADTAIINAEGGQSGGDDKKEYFI. The segment at 367–398 is disordered; it reads AKGSDDAPDADTAIINAEGGQSGGDDKKEYFI. At Ser388 the chain carries Phosphoserine.

The protein belongs to the nectin family. Homodimer. Can form trans-heterodimers with NECTIN3. Interacts with EPB41L1, DLG3, PALS2 and CASK. In terms of tissue distribution, isoform 1 is expressed mainly in adult and fetal brain. Isoform 2 is highly expressed in adult brain and weakly expressed in placenta. In brain, Isoform 2 is highly expressed in cerebellum.

It is found in the cell membrane. Its subcellular location is the cell junction. In terms of biological role, involved in cell-cell adhesion. Has both calcium-independent homophilic cell-cell adhesion activity and calcium-independent heterophilic cell-cell adhesion activity with IGSF4, NECTIN1 and NECTIN3. Interaction with EPB41L1 may regulate structure or function of cell-cell junctions. This is Cell adhesion molecule 3 (CADM3) from Homo sapiens (Human).